The chain runs to 146 residues: Ferredoxin-thioredoxin reductase catalytic chain, chloroplastic (146 aa).

A chloroplast-targeting transit peptide spans Met1–Arg26. Cys85 is a [4Fe-4S] cluster binding site. Cys87 acts as the Nucleophile in catalysis. Cys87 and Cys117 are joined by a disulfide. [4Fe-4S] cluster-binding residues include Cys104, Cys106, and Cys115.

The protein belongs to the ferredoxin thioredoxin reductase beta subunit family. Heterodimer of subunit A (variable subunit) and subunit B (catalytic subunit). Heterodimeric FTR forms a complex with ferredoxin and thioredoxin. [4Fe-4S] cluster is required as a cofactor.

The protein resides in the plastid. The protein localises to the chloroplast. It catalyses the reaction [thioredoxin]-disulfide + 2 reduced [2Fe-2S]-[ferredoxin] + 2 H(+) = [thioredoxin]-dithiol + 2 oxidized [2Fe-2S]-[ferredoxin]. Catalytic subunit of the ferredoxin-thioredoxin reductase (FTR), which catalyzes the two-electron reduction of thioredoxins by the electrons provided by reduced ferredoxin. In Oryza sativa subsp. japonica (Rice), this protein is Ferredoxin-thioredoxin reductase catalytic chain, chloroplastic.